A 287-amino-acid polypeptide reads, in one-letter code: ATP synthase gamma chain (287 aa).

This sequence belongs to the ATPase gamma chain family. In terms of assembly, F-type ATPases have 2 components, CF(1) - the catalytic core - and CF(0) - the membrane proton channel. CF(1) has five subunits: alpha(3), beta(3), gamma(1), delta(1), epsilon(1). CF(0) has three main subunits: a, b and c.

Its subcellular location is the cell membrane. In terms of biological role, produces ATP from ADP in the presence of a proton gradient across the membrane. The gamma chain is believed to be important in regulating ATPase activity and the flow of protons through the CF(0) complex. In Mycoplasmopsis agalactiae (strain NCTC 10123 / CIP 59.7 / PG2) (Mycoplasma agalactiae), this protein is ATP synthase gamma chain.